The following is a 279-amino-acid chain: Probable endonuclease 4 (279 aa).

Zn(2+) contacts are provided by His69, His109, Glu145, Asp179, His182, His216, Asp229, His231, and Glu261.

Belongs to the AP endonuclease 2 family. It depends on Zn(2+) as a cofactor.

It carries out the reaction Endonucleolytic cleavage to 5'-phosphooligonucleotide end-products.. Endonuclease IV plays a role in DNA repair. It cleaves phosphodiester bonds at apurinic or apyrimidinic (AP) sites, generating a 3'-hydroxyl group and a 5'-terminal sugar phosphate. The polypeptide is Probable endonuclease 4 (Buchnera aphidicola subsp. Schizaphis graminum (strain Sg)).